A 182-amino-acid chain; its full sequence is Oligoribonuclease (182 aa).

In terms of domain architecture, Exonuclease spans 8-171 (LIWIDLEMTG…DDIRESIKEL (164 aa)). Tyr-129 is a catalytic residue.

Belongs to the oligoribonuclease family.

It is found in the cytoplasm. In terms of biological role, 3'-to-5' exoribonuclease specific for small oligoribonucleotides. This Haemophilus influenzae (strain ATCC 51907 / DSM 11121 / KW20 / Rd) protein is Oligoribonuclease (orn).